We begin with the raw amino-acid sequence, 648 residues long: Biosynthetic arginine decarboxylase (648 aa).

Lys-109 is modified (N6-(pyridoxal phosphate)lysine). A substrate-binding site is contributed by 291-301 (LDVGGGLGVDY).

The protein belongs to the Orn/Lys/Arg decarboxylase class-II family. SpeA subfamily. The cofactor is Mg(2+). Pyridoxal 5'-phosphate is required as a cofactor.

The catalysed reaction is L-arginine + H(+) = agmatine + CO2. The protein operates within amine and polyamine biosynthesis; agmatine biosynthesis; agmatine from L-arginine: step 1/1. Functionally, catalyzes the biosynthesis of agmatine from arginine. This Prochlorococcus marinus (strain MIT 9303) protein is Biosynthetic arginine decarboxylase.